The following is a 466-amino-acid chain: MSTTTNIQLNNLTAISPIDGRYWGQVQVLSEYFSEYALIKYRVQVEIEYFIELSKLSELKPLNAVNKEDDHKKLRDIYLQFKESDAQKIKQIEKTTNHDIKAVEYFIKEKMHTELQYSEVVTEFIHFGLTSQDINNTAIPLSIVESVEKVLIPQLKQSILEPLRQFAQQWKSIPMLARTHGQPATPTTVGKELMVFIERLENQINHLEQSVPHTCKFGGATGNLNAHKVSYPAIDWVVFSEKFVKVLHPSLKRMRFTTQIEHYDNVASLLDAFKRINTILIDLCRDIWTYISMEYFNQKLVKGEVGSSTMPHKVNPIDFENAEGNMGVANALYEHLSAKLPISRLQRDLTDSTVLRSIGVPFSHSILSFKSIQRGLSKLVLNEANIAKDLDANWAVVSEAIQTILRREGFPKPYEALKELTRVSGSKKITESDIQTFIDSLSIPDDIKSELKLITPFNYIGIIPDF.

Residues 21–22 (RY), 97–99 (NHD), and 130–131 (TS) each bind substrate. Histidine 180 (proton donor/acceptor) is an active-site residue. Glutamine 259 is a substrate binding site. Serine 307 serves as the catalytic Proton donor/acceptor. Residues arginine 347, serine 352, and arginine 356 each coordinate substrate.

It belongs to the lyase 1 family. Adenylosuccinate lyase subfamily. As to quaternary structure, homotetramer. Residues from neighboring subunits contribute catalytic and substrate-binding residues to each active site.

The catalysed reaction is N(6)-(1,2-dicarboxyethyl)-AMP = fumarate + AMP. It catalyses the reaction (2S)-2-[5-amino-1-(5-phospho-beta-D-ribosyl)imidazole-4-carboxamido]succinate = 5-amino-1-(5-phospho-beta-D-ribosyl)imidazole-4-carboxamide + fumarate. The protein operates within purine metabolism; AMP biosynthesis via de novo pathway; AMP from IMP: step 2/2. Its pathway is purine metabolism; IMP biosynthesis via de novo pathway; 5-amino-1-(5-phospho-D-ribosyl)imidazole-4-carboxamide from 5-amino-1-(5-phospho-D-ribosyl)imidazole-4-carboxylate: step 2/2. This is Adenylosuccinate lyase (purB) from Dictyostelium discoideum (Social amoeba).